A 330-amino-acid polypeptide reads, in one-letter code: D-alanine--D-alanine ligase (330 aa).

Positions 120-326 constitute an ATP-grasp domain; it reads KLWYDALGIP…FKTFLQKAVL (207 aa). 150-205 provides a ligand contact to ATP; the sequence is AFKQWGGLFVKAACQGSSVGCYKVTSEAELSKAINDAFGYSQQVLVEKAVKPRELE. Residues D280, E293, and N295 each contribute to the Mg(2+) site.

It belongs to the D-alanine--D-alanine ligase family. Mg(2+) serves as cofactor. Requires Mn(2+) as cofactor.

The protein resides in the cytoplasm. The catalysed reaction is 2 D-alanine + ATP = D-alanyl-D-alanine + ADP + phosphate + H(+). The protein operates within cell wall biogenesis; peptidoglycan biosynthesis. Its function is as follows. Cell wall formation. The sequence is that of D-alanine--D-alanine ligase from Aliivibrio fischeri (strain ATCC 700601 / ES114) (Vibrio fischeri).